The following is a 304-amino-acid chain: Cell surface-binding protein OPG105 (304 aa).

An Alpha-carbonic anhydrase domain is found at 1-235; sequence MPQQLSPINI…NDDTQVYYSG (235 aa). The Virion surface portion of the chain corresponds to 1–275; that stretch reads MPQQLSPINI…YQKYIEGNKT (275 aa). Residues 276–294 form a helical membrane-spanning segment; that stretch reads FAIIAIVFVFILTAILFLM. Topologically, residues 295–304 are intravirion; that stretch reads SRRYSREKQN.

This sequence belongs to the alpha-carbonic anhydrase family. As to quaternary structure, homodimer; disulfide-linked. Apparently non-glycosylated.

It is found in the virion membrane. Binds to chondroitin sulfate on the cell surface to provide virion attachment to target cell. This Vaccinia virus (strain Copenhagen) (VACV) protein is Cell surface-binding protein OPG105 (OPG105).